The chain runs to 81 residues: RNA-binding protein Hfq (81 aa).

Residues 10-69 form the Sm domain; sequence DPFLNTLRKEHVPVSIYLVNGIKLQGQVDSFDQYVILLKNTVTQMVYKHAISTIVPGRAV.

It belongs to the Hfq family. In terms of assembly, homohexamer.

Functionally, RNA chaperone that binds small regulatory RNA (sRNAs) and mRNAs to facilitate mRNA translational regulation in response to envelope stress, environmental stress and changes in metabolite concentrations. Also binds with high specificity to tRNAs. The sequence is that of RNA-binding protein Hfq from Methylobacillus flagellatus (strain ATCC 51484 / DSM 6875 / VKM B-1610 / KT).